The chain runs to 438 residues: V-type ATP synthase beta chain (438 aa).

This sequence belongs to the ATPase alpha/beta chains family.

Its function is as follows. Produces ATP from ADP in the presence of a proton gradient across the membrane. The V-type beta chain is a regulatory subunit. The sequence is that of V-type ATP synthase beta chain from Chlamydia trachomatis serovar A (strain ATCC VR-571B / DSM 19440 / HAR-13).